Consider the following 598-residue polypeptide: Elongation factor 4 (598 aa).

A tr-type G domain is found at 2-184 (TKIRNFSIIA…AVVDRIPPPS (183 aa)). GTP-binding positions include 14-19 (DHGKST) and 131-134 (NKID).

The protein belongs to the TRAFAC class translation factor GTPase superfamily. Classic translation factor GTPase family. LepA subfamily.

It localises to the cell inner membrane. The enzyme catalyses GTP + H2O = GDP + phosphate + H(+). In terms of biological role, required for accurate and efficient protein synthesis under certain stress conditions. May act as a fidelity factor of the translation reaction, by catalyzing a one-codon backward translocation of tRNAs on improperly translocated ribosomes. Back-translocation proceeds from a post-translocation (POST) complex to a pre-translocation (PRE) complex, thus giving elongation factor G a second chance to translocate the tRNAs correctly. Binds to ribosomes in a GTP-dependent manner. The chain is Elongation factor 4 from Syntrophobacter fumaroxidans (strain DSM 10017 / MPOB).